The primary structure comprises 108 residues: ACAHLCKEADLKTALEACKAADSFNFKTFFHTLGFASKXXDDVKKXXXVLDQDASGFLEVEELKLFLQNFCPKXXXLTDAETKAFLKAGDADGDGMLGLDEFAVLVKQ.

Residue Ala1 is modified to N-acetylalanine. EF-hand domains follow at residues 38–73 (KXXD…FCPK) and 77–108 (LTDA…LVKQ). 11 residues coordinate Ca(2+): Asp51, Asp53, Ser55, Phe57, Glu59, Glu62, Asp90, Asp92, Asp94, Met96, and Glu101.

It belongs to the parvalbumin family.

Functionally, in muscle, parvalbumin is thought to be involved in relaxation after contraction. It binds two calcium ions. The chain is Parvalbumin beta 1 from Oncorhynchus mykiss (Rainbow trout).